Reading from the N-terminus, the 312-residue chain is Beta-ketoacyl-[acyl-carrier-protein] synthase III (312 aa).

Residues C112 and H237 contribute to the active site. An ACP-binding region spans residues 238 to 242 (QANIR). N267 is a catalytic residue.

It belongs to the thiolase-like superfamily. FabH family. As to quaternary structure, homodimer.

Its subcellular location is the cytoplasm. The enzyme catalyses (2S)-2-methylbutanoyl-CoA + malonyl-[ACP] + H(+) = (4S)-4-methyl-3-oxohexanoyl-[ACP] + CO2 + CoA. It catalyses the reaction 2-methylpropanoyl-CoA + malonyl-[ACP] + H(+) = 4-methyl-3-oxopentanoyl-[ACP] + CO2 + CoA. The catalysed reaction is 3-methylbutanoyl-CoA + malonyl-[ACP] + H(+) = 5-methyl-3-oxohexanoyl-[ACP] + CO2 + CoA. It carries out the reaction malonyl-[ACP] + acetyl-CoA + H(+) = 3-oxobutanoyl-[ACP] + CO2 + CoA. The protein operates within lipid metabolism; fatty acid biosynthesis. Its function is as follows. Catalyzes the condensation reaction of fatty acid synthesis by the addition to an acyl acceptor of two carbons from malonyl-ACP. Catalyzes the first condensation reaction which initiates fatty acid synthesis and may therefore play a role in governing the total rate of fatty acid production. Possesses both acetoacetyl-ACP synthase and acetyl transacylase activities. Can use branched-chain acyl-CoAs, with a preference for 2-methylbutanoyl-CoA, the precursor of odd-numbered anteiso fatty acids, at 30 degrees Celsius, which is further increased at a low temperature. Shows weak activity with acetyl-CoA. The chain is Beta-ketoacyl-[acyl-carrier-protein] synthase III from Listeria monocytogenes serotype 1/2a (strain 10403S).